We begin with the raw amino-acid sequence, 678 residues long: Oviduct-specific glycoprotein (678 aa).

Residues M1 to A21 form the signal peptide. A GH18 domain is found at H22–A385. C26 and C51 are oxidised to a cystine. Chitin contacts are provided by residues L71 to Q72, G98 to N101, Y142, L211 to D214, and W355. 2 N-linked (GlcNAc...) asparagine glycosylation sites follow: N402 and N441. A disordered region spans residues L524–G544. Residues G528 to G544 show a composition bias toward polar residues. 3 N-linked (GlcNAc...) asparagine glycosylation sites follow: N580, N596, and N648. Residues I581–R606 form a disordered region. Over residues S651–L662 the composition is skewed to polar residues. The tract at residues S651 to A678 is disordered.

It belongs to the glycosyl hydrolase 18 family. As to expression, oviduct.

It is found in the cytoplasmic vesicle. It localises to the secretory vesicle. In terms of biological role, binds to oocyte zona pellucida in vivo. May play a role in the fertilization process and/or early embryonic development. In Homo sapiens (Human), this protein is Oviduct-specific glycoprotein (OVGP1).